We begin with the raw amino-acid sequence, 351 residues long: Xaa-Pro dipeptidase (351 aa).

Co(2+)-binding residues include D212, D223, H287, E316, and E330.

Belongs to the peptidase M24B family. Archaeal-type prolidase subfamily. Homodimer. Co(2+) is required as a cofactor.

The protein resides in the cytoplasm. It catalyses the reaction Xaa-L-Pro dipeptide + H2O = an L-alpha-amino acid + L-proline. In terms of biological role, splits dipeptides with a prolyl in the C-terminal position and a nonpolar amino acid at the N-terminal position. This Pyrococcus horikoshii (strain ATCC 700860 / DSM 12428 / JCM 9974 / NBRC 100139 / OT-3) protein is Xaa-Pro dipeptidase (pepQ).